A 198-amino-acid polypeptide reads, in one-letter code: MPEQSNDYRVVVFGAGGVGKSSLVLRFVKGTFRDTYIPTIEDTYRQVISCDKSVCTLQITDTTGSHQFPAMQRLSISKGHAFILVFSVTSKQSLDELSPIYKLIVQIKGSVEDIPIMLVGNKCDETQREVHTREAQAVAQEWKCAFMETSAKMNYNVKELFQELLTLETRRSVSLSVDGKRSSKQKRADRIKGKCALM.

Residues 17–22, 33–39, 61–65, 121–125, Ala-151, and 151–152 contribute to the GTP site; these read GVGKSS, RDTYIPT, DTTGS, NKCDE, and AK. Positions 36-44 match the Effector region motif; it reads YIPTIEDTY. Cys-195 carries the post-translational modification Cysteine methyl ester. The S-geranylgeranyl cysteine moiety is linked to residue Cys-195. A propeptide spans 196–198 (removed in mature form); the sequence is ALM.

It belongs to the small GTPase superfamily. Di-Ras family.

Its subcellular location is the cell membrane. Displays low GTPase activity and exists predominantly in the GTP-bound form. The protein is GTP-binding protein Di-Ras1 (Diras1) of Mus musculus (Mouse).